We begin with the raw amino-acid sequence, 447 residues long: uncharacterized protein (447 aa).

The protein belongs to the class-II fumarase/aspartase family.

It localises to the cytoplasm. The protein localises to the nucleus. This is an uncharacterized protein from Schizosaccharomyces pombe (strain 972 / ATCC 24843) (Fission yeast).